We begin with the raw amino-acid sequence, 423 residues long: O-methyltransferase aoiF (423 aa).

An S-adenosyl-L-methionine-binding site is contributed by D273. H324 serves as the catalytic Proton acceptor.

It belongs to the class I-like SAM-binding methyltransferase superfamily. Cation-independent O-methyltransferase family.

Its pathway is secondary metabolite biosynthesis. Functionally, O-methyltransferase; part of the gene cluster that mediates the biosynthesis of a methylated derivative of known natural products orthosporin and diaporthin. Within the pathway, aoiF catalyzes the biotransformation of orthosporin to diaporthin but also of diaporthin to the final product, by performing a tandem methylation of the polyketide core. Orthosporin is produced by an oxidoreductase that has still to be identified and that catalyzes the stereospecific reduction of the carbonyl moiety of the hexaketide isocoumarin scaffold produced by the non-reducing polyketide synthase aoiG to generate the S-configured secondary alcohol at C-11. In Aspergillus oryzae (strain ATCC 42149 / RIB 40) (Yellow koji mold), this protein is O-methyltransferase aoiF.